Reading from the N-terminus, the 151-residue chain is MCDFTEDQTAEFKEAFQLFDRTGDGKILYSQCGDVMRALGQNPTNAEVLKVLGNPKSDEMNVKVLDFEHFLPMLQTVAKNKDQGTYEDYVEGLRVFDKEGNGTVMGAEIRHVLVTLGEKMTEEEVEMLVAGHEDSNGCINYEAFVRHILSG.

The residue at position 2 (Cys-2) is an N-acetylcysteine. In terms of domain architecture, EF-hand 1 spans 7-42 (DQTAEFKEAFQLFDRTGDGKILYSQCGDVMRALGQN). Ser-57 carries the phosphoserine modification. Position 81 is an N6-acetyllysine (Lys-81). One can recognise an EF-hand 2 domain in the interval 84 to 119 (GTYEDYVEGLRVFDKEGNGTVMGAEIRHVLVTLGEK).

As to quaternary structure, myosin is a hexamer of 2 heavy chains and 4 light chains. Interacts with SPATA6.

Functionally, regulatory light chain of myosin. Does not bind calcium. The chain is Myosin light polypeptide 6 (MYL6) from Bos taurus (Bovine).